Here is a 392-residue protein sequence, read N- to C-terminus: Large ribosomal subunit protein uL3 (392 aa).

The protein belongs to the universal ribosomal protein uL3 family. As to quaternary structure, component of the large ribosomal subunit (LSU). Mature N.crassa ribosomes consist of a small (40S) and a large (60S) subunit. The 40S small subunit contains 1 molecule of ribosomal RNA (18S rRNA) and at least 32 different proteins. The large 60S subunit contains 3 rRNA molecules (26S, 5.8S and 5S rRNA) and at least 42 different proteins.

Its subcellular location is the cytoplasm. Functionally, component of the ribosome, a large ribonucleoprotein complex responsible for the synthesis of proteins in the cell. The small ribosomal subunit (SSU) binds messenger RNAs (mRNAs) and translates the encoded message by selecting cognate aminoacyl-transfer RNA (tRNA) molecules. The large subunit (LSU) contains the ribosomal catalytic site termed the peptidyl transferase center (PTC), which catalyzes the formation of peptide bonds, thereby polymerizing the amino acids delivered by tRNAs into a polypeptide chain. The nascent polypeptides leave the ribosome through a tunnel in the LSU and interact with protein factors that function in enzymatic processing, targeting, and the membrane insertion of nascent chains at the exit of the ribosomal tunnel. This chain is Large ribosomal subunit protein uL3 (rpl-3), found in Neurospora crassa (strain ATCC 24698 / 74-OR23-1A / CBS 708.71 / DSM 1257 / FGSC 987).